The sequence spans 360 residues: Aminomethyltransferase (360 aa).

The protein belongs to the GcvT family. In terms of assembly, the glycine cleavage system is composed of four proteins: P, T, L and H.

The catalysed reaction is N(6)-[(R)-S(8)-aminomethyldihydrolipoyl]-L-lysyl-[protein] + (6S)-5,6,7,8-tetrahydrofolate = N(6)-[(R)-dihydrolipoyl]-L-lysyl-[protein] + (6R)-5,10-methylene-5,6,7,8-tetrahydrofolate + NH4(+). Functionally, the glycine cleavage system catalyzes the degradation of glycine. This Flavobacterium psychrophilum (strain ATCC 49511 / DSM 21280 / CIP 103535 / JIP02/86) protein is Aminomethyltransferase.